The chain runs to 1024 residues: Beta-galactosidase (1024 aa).

The substrate site is built by asparagine 103 and aspartate 202. Aspartate 202 contacts Na(+). Positions 417, 419, and 462 each coordinate Mg(2+). Residues glutamate 462 and 538–541 (EYAH) each bind substrate. The active-site Proton donor is the glutamate 462. Residue glutamate 538 is the Nucleophile of the active site. Mg(2+) is bound at residue asparagine 598. Na(+) contacts are provided by phenylalanine 602 and asparagine 605. The substrate site is built by asparagine 605 and tryptophan 1000.

This sequence belongs to the glycosyl hydrolase 2 family. In terms of assembly, homotetramer. Mg(2+) is required as a cofactor. It depends on Na(+) as a cofactor.

It carries out the reaction Hydrolysis of terminal non-reducing beta-D-galactose residues in beta-D-galactosides.. The chain is Beta-galactosidase from Escherichia coli (strain ATCC 8739 / DSM 1576 / NBRC 3972 / NCIMB 8545 / WDCM 00012 / Crooks).